We begin with the raw amino-acid sequence, 310 residues long: Malate dehydrogenase (310 aa).

NAD(+) contacts are provided by residues 7-12 and D32; that span reads GAGHVG. Substrate is bound by residues R81 and R87. NAD(+)-binding positions include N94 and 117 to 119; that span reads VSN. N119 and R150 together coordinate substrate. H174 serves as the catalytic Proton acceptor.

It belongs to the LDH/MDH superfamily. MDH type 3 family.

It catalyses the reaction (S)-malate + NAD(+) = oxaloacetate + NADH + H(+). Catalyzes the reversible oxidation of malate to oxaloacetate. The polypeptide is Malate dehydrogenase (Chlorobium phaeobacteroides (strain BS1)).